Reading from the N-terminus, the 119-residue chain is Large ribosomal subunit protein uL18 (119 aa).

Belongs to the universal ribosomal protein uL18 family. As to quaternary structure, part of the 50S ribosomal subunit; part of the 5S rRNA/L5/L18/L25 subcomplex. Contacts the 5S and 23S rRNAs.

This is one of the proteins that bind and probably mediate the attachment of the 5S RNA into the large ribosomal subunit, where it forms part of the central protuberance. The protein is Large ribosomal subunit protein uL18 of Chlorobaculum tepidum (strain ATCC 49652 / DSM 12025 / NBRC 103806 / TLS) (Chlorobium tepidum).